Here is a 20-residue protein sequence, read N- to C-terminus: Cytochrome P450 2A7 (20 aa).

This sequence belongs to the cytochrome P450 family. The cofactor is heme.

It localises to the endoplasmic reticulum membrane. Its subcellular location is the microsome membrane. It carries out the reaction an organic molecule + reduced [NADPH--hemoprotein reductase] + O2 = an alcohol + oxidized [NADPH--hemoprotein reductase] + H2O + H(+). Its function is as follows. Exhibits a high coumarin 7-hydroxylase activity. The polypeptide is Cytochrome P450 2A7 (CYP2A7) (Papio sp. (Baboon)).